We begin with the raw amino-acid sequence, 84 residues long: Large ribosomal subunit protein uL23 (84 aa).

It belongs to the universal ribosomal protein uL23 family. As to quaternary structure, part of the 50S ribosomal subunit. Contacts protein L29.

In terms of biological role, binds to 23S rRNA. One of the proteins that surrounds the polypeptide exit tunnel on the outside of the ribosome. The chain is Large ribosomal subunit protein uL23 from Thermoplasma acidophilum (strain ATCC 25905 / DSM 1728 / JCM 9062 / NBRC 15155 / AMRC-C165).